The primary structure comprises 97 residues: Exodeoxyribonuclease 7 small subunit (97 aa).

Residues 64 to 97 are disordered; that stretch reads NGQLHPAEEKGDDVSNNGVQNQGYKSQFLDGDVF. A compositionally biased stretch (polar residues) spans 77 to 88; the sequence is VSNNGVQNQGYK.

It belongs to the XseB family. Heterooligomer composed of large and small subunits.

The protein localises to the cytoplasm. The enzyme catalyses Exonucleolytic cleavage in either 5'- to 3'- or 3'- to 5'-direction to yield nucleoside 5'-phosphates.. Functionally, bidirectionally degrades single-stranded DNA into large acid-insoluble oligonucleotides, which are then degraded further into small acid-soluble oligonucleotides. In Limosilactobacillus fermentum (strain NBRC 3956 / LMG 18251) (Lactobacillus fermentum), this protein is Exodeoxyribonuclease 7 small subunit.